The following is a 145-amino-acid chain: METSDELKQRIGDLSYEVTQHAATESPFTGEYDDFFEKGIYIDIVSGEVLFSSLDKFNSGCGWPAFSKPIENRMVTNHDDSSYGMRRVEVKSREAGSHLGHVFSDGPKEAGGLRYCINSAALKFIPYEQMEKEGYAQWLTLFDET.

Residues 4-127 form the MsrB domain; the sequence is SDELKQRIGD…NSAALKFIPY (124 aa). The Nucleophile role is filled by C116.

It belongs to the MsrB Met sulfoxide reductase family.

The enzyme catalyses L-methionyl-[protein] + [thioredoxin]-disulfide + H2O = L-methionyl-(R)-S-oxide-[protein] + [thioredoxin]-dithiol. In Streptococcus pyogenes serotype M18 (strain MGAS8232), this protein is Peptide methionine sulfoxide reductase MsrB.